We begin with the raw amino-acid sequence, 284 residues long: Bifunctional protein FolD (284 aa).

NADP(+) contacts are provided by residues 166-168, Ser191, and Ile232; that span reads GAS.

The protein belongs to the tetrahydrofolate dehydrogenase/cyclohydrolase family. Homodimer.

The catalysed reaction is (6R)-5,10-methylene-5,6,7,8-tetrahydrofolate + NADP(+) = (6R)-5,10-methenyltetrahydrofolate + NADPH. It carries out the reaction (6R)-5,10-methenyltetrahydrofolate + H2O = (6R)-10-formyltetrahydrofolate + H(+). It functions in the pathway one-carbon metabolism; tetrahydrofolate interconversion. Functionally, catalyzes the oxidation of 5,10-methylenetetrahydrofolate to 5,10-methenyltetrahydrofolate and then the hydrolysis of 5,10-methenyltetrahydrofolate to 10-formyltetrahydrofolate. This is Bifunctional protein FolD from Neisseria meningitidis serogroup B (strain ATCC BAA-335 / MC58).